The sequence spans 387 residues: Sorting nexin-7 (387 aa).

The region spanning 30 to 151 is the PX domain; sequence KDLFITVDEP…IFLTAQAWEL (122 aa). The a 1,2-diacyl-sn-glycero-3-phospho-(1D-myo-inositol-3-phosphate) site is built by Arg-73, Gln-75, Lys-103, and Arg-117. The 210-residue stretch at 178–387 folds into the BAR domain; that stretch reads GVKNRPEEFM…HLEEASEDKP (210 aa).

Belongs to the sorting nexin family. Heterodimer; heterodimerizes with SNX4.

Its subcellular location is the early endosome membrane. Functionally, involved in the regulation of endocytosis and in several stages of intracellular trafficking. Together with SNX4, involved in autophagosome assembly by regulating trafficking and recycling of phospholipid scramblase ATG9A. This chain is Sorting nexin-7, found in Homo sapiens (Human).